Reading from the N-terminus, the 118-residue chain is DNA-directed RNA polymerase subunit omega (118 aa).

The protein belongs to the RNA polymerase subunit omega family. As to quaternary structure, the RNAP catalytic core consists of 2 alpha, 1 beta, 1 beta' and 1 omega subunit. When a sigma factor is associated with the core the holoenzyme is formed, which can initiate transcription.

It carries out the reaction RNA(n) + a ribonucleoside 5'-triphosphate = RNA(n+1) + diphosphate. In terms of biological role, promotes RNA polymerase assembly. Latches the N- and C-terminal regions of the beta' subunit thereby facilitating its interaction with the beta and alpha subunits. The sequence is that of DNA-directed RNA polymerase subunit omega from Paracoccus denitrificans (strain Pd 1222).